The sequence spans 402 residues: Nodulation protein E (402 aa).

Positions 2–401 constitute a Ketosynthase family 3 (KS3) domain; sequence DRRVVITGMG…GTNAVLAFKQ (400 aa). Active-site for beta-ketoacyl synthase activity residues include Cys-162, His-294, and His-331. The helical transmembrane segment at 329–348 threads the bilayer; it reads HAHCIGAASALEMIACVMAI.

The protein belongs to the thiolase-like superfamily. Beta-ketoacyl-ACP synthases family.

Its subcellular location is the cell inner membrane. Its function is as follows. Proposed to synthesize NOD factor fatty acyl chain. Involved in the synthesis of a highly unsaturated fatty acid moiety, which forms part of a lipo-oligosaccharide that is responsible for host specificity. The chain is Nodulation protein E (nodE) from Rhizobium meliloti (strain 1021) (Ensifer meliloti).